We begin with the raw amino-acid sequence, 59 residues long: Large ribosomal subunit protein bL32 (59 aa).

Residues 1-59 (MAVQQNKKSPSKRGMHRSHDHLSAAPLAVEPTTGETHLRHHVSPNGYYRGRKVIKTKND) are disordered. Basic residues-rich tracts occupy residues 9–19 (SPSKRGMHRSH) and 49–59 (RGRKVIKTKND).

It belongs to the bacterial ribosomal protein bL32 family.

The protein is Large ribosomal subunit protein bL32 of Cupriavidus necator (strain ATCC 17699 / DSM 428 / KCTC 22496 / NCIMB 10442 / H16 / Stanier 337) (Ralstonia eutropha).